The chain runs to 592 residues: A-type ATP synthase subunit A (592 aa).

234–241 (GAFGTGKT) contacts ATP.

The protein belongs to the ATPase alpha/beta chains family. Has multiple subunits with at least A(3), B(3), C, D, E, F, H, I and proteolipid K(x).

The protein localises to the cell membrane. It carries out the reaction ATP + H2O + 4 H(+)(in) = ADP + phosphate + 5 H(+)(out). Its function is as follows. Component of the A-type ATP synthase that produces ATP from ADP in the presence of a proton gradient across the membrane. The A chain is the catalytic subunit. The sequence is that of A-type ATP synthase subunit A from Nitrosopumilus maritimus (strain SCM1).